The following is a 95-amino-acid chain: UPF0235 protein Pcar_0617 (95 aa).

This sequence belongs to the UPF0235 family.

The polypeptide is UPF0235 protein Pcar_0617 (Syntrophotalea carbinolica (strain DSM 2380 / NBRC 103641 / GraBd1) (Pelobacter carbinolicus)).